A 231-amino-acid chain; its full sequence is Ferredoxin-type protein NapG (231 aa).

The segment at residues 1–41 is a signal peptide (tat-type signal); sequence MSRSAKPQNGRRRFLRDVVRTAGGLAAVGVALGLQQQTARA. 4Fe-4S ferredoxin-type domains are found at residues 50-81, 89-121, 130-166, and 177-208; these read GAIN…LATL, TPYF…REIE, LAVL…LELE, and FLPT…VLPL. The [4Fe-4S] cluster site is built by C61, C64, C67, C71, C99, C102, C107, C111, C139, C147, C150, C154, C186, C189, C192, and C196.

Requires [4Fe-4S] cluster as cofactor. In terms of processing, exported by the Tat system. The position of the signal peptide cleavage has not been experimentally proven.

It is found in the periplasm. Its function is as follows. Required for electron transfer from ubiquinol, via NapC, to the periplasmic nitrate reductase NapAB complex. The sequence is that of Ferredoxin-type protein NapG (napG) from Escherichia coli (strain K12).